A 147-amino-acid chain; its full sequence is Hemoglobin subunit epsilon (147 aa).

Positions 3-147 (HFTAEEKAAI…VAIALGHKYH (145 aa)) constitute a Globin domain. Phosphoserine is present on residues Ser14 and Ser51. Heme b-binding residues include His64 and His93.

The protein belongs to the globin family. Heterotetramer of two alpha chains and two epsilon chains in early embryonic hemoglobin Gower-2; two zeta chains and two epsilon chains in early embryonic hemoglobin Gower-1. As to expression, red blood cells.

The epsilon chain is a beta-type chain of early mammalian embryonic hemoglobin. In Alouatta belzebul (Red-handed howler monkey), this protein is Hemoglobin subunit epsilon (HBE1).